The following is a 345-amino-acid chain: Protoheme IX farnesyltransferase (345 aa).

9 consecutive transmembrane segments (helical) span residues 33–53 (VMSL…TPIH), 54–74 (PLLG…SGAL), 105–125 (ATLG…AINW), 126–146 (LAAG…TMWL), 154–174 (IVIG…AATG), 182–202 (LMVL…SLYI), 226–246 (QILL…FTGL), 247–267 (GGWL…TLAV), and 315–335 (ILYL…GLPI).

This sequence belongs to the UbiA prenyltransferase family. Protoheme IX farnesyltransferase subfamily.

The protein resides in the cell inner membrane. The catalysed reaction is heme b + (2E,6E)-farnesyl diphosphate + H2O = Fe(II)-heme o + diphosphate. It functions in the pathway porphyrin-containing compound metabolism; heme O biosynthesis; heme O from protoheme: step 1/1. In terms of biological role, converts heme B (protoheme IX) to heme O by substitution of the vinyl group on carbon 2 of heme B porphyrin ring with a hydroxyethyl farnesyl side group. The chain is Protoheme IX farnesyltransferase from Caulobacter sp. (strain K31).